Reading from the N-terminus, the 139-residue chain is Small ribosomal subunit protein uS11 (139 aa).

2 disordered regions span residues 1–33 (MPPA…AAHI) and 118–139 (GAIS…RRRV). Residues 14–23 (KGQKTRRREK) are compositionally biased toward basic residues.

It belongs to the universal ribosomal protein uS11 family. In terms of assembly, part of the 30S ribosomal subunit. Interacts with proteins S7 and S18. Binds to IF-3.

In terms of biological role, located on the platform of the 30S subunit, it bridges several disparate RNA helices of the 16S rRNA. Forms part of the Shine-Dalgarno cleft in the 70S ribosome. This is Small ribosomal subunit protein uS11 from Mycobacterium tuberculosis (strain ATCC 25177 / H37Ra).